Here is a 422-residue protein sequence, read N- to C-terminus: UDP-N-acetylglucosamine 1-carboxyvinyltransferase (422 aa).

Residue 22–23 (KN) participates in phosphoenolpyruvate binding. Arg-94 serves as a coordination point for UDP-N-acetyl-alpha-D-glucosamine. The active-site Proton donor is the Cys-118. Cys-118 is subject to 2-(S-cysteinyl)pyruvic acid O-phosphothioketal. UDP-N-acetyl-alpha-D-glucosamine contacts are provided by residues 123–127 (RPVDL), Asp-309, and Ile-331.

Belongs to the EPSP synthase family. MurA subfamily.

It is found in the cytoplasm. The catalysed reaction is phosphoenolpyruvate + UDP-N-acetyl-alpha-D-glucosamine = UDP-N-acetyl-3-O-(1-carboxyvinyl)-alpha-D-glucosamine + phosphate. The protein operates within cell wall biogenesis; peptidoglycan biosynthesis. In terms of biological role, cell wall formation. Adds enolpyruvyl to UDP-N-acetylglucosamine. The protein is UDP-N-acetylglucosamine 1-carboxyvinyltransferase of Cereibacter sphaeroides (strain ATCC 17025 / ATH 2.4.3) (Rhodobacter sphaeroides).